The primary structure comprises 89 residues: Small ribosomal subunit protein uS15 (89 aa).

This sequence belongs to the universal ribosomal protein uS15 family. In terms of assembly, part of the 30S ribosomal subunit. Forms a bridge to the 50S subunit in the 70S ribosome, contacting the 23S rRNA.

One of the primary rRNA binding proteins, it binds directly to 16S rRNA where it helps nucleate assembly of the platform of the 30S subunit by binding and bridging several RNA helices of the 16S rRNA. In terms of biological role, forms an intersubunit bridge (bridge B4) with the 23S rRNA of the 50S subunit in the ribosome. This chain is Small ribosomal subunit protein uS15, found in Streptococcus equi subsp. zooepidemicus (strain H70).